A 205-amino-acid chain; its full sequence is MKKLVAWFNGLSKMWKVVVIIGAVFVVIIALTTGEDEGEQTKTKKDSNKVVKTASRPKLSTKDLALIKADLAEFEARELSSEKILKDTIKEESWSDLDFANDNINQMIGTMKRYQQEILSIDAIKRSSEASADTEAFKKIFKEWSEFKIERIQVTIDLLNGKKDSEAVFKKTYPNQIIFKKVRTNKLQTALNNLKVGYELLDSQK.

The N-terminal stretch at 1–36 is a signal peptide; sequence MKKLVAWFNGLSKMWKVVVIIGAVFVVIIALTTGED.

Interacts specifically with host BAHD1.

It localises to the secreted. The protein localises to the host nucleus. Its function is as follows. Relieves the repression of host cell immune response genes (interferon-stimulated genes) by blocking the recruitment of host BAHD1 to these genes. May modulate interferon-mediated immune response to control bacterial colonization of the host. In Listeria monocytogenes serovar 1/2a (strain ATCC BAA-679 / EGD-e), this protein is Listeria nuclear targeted protein A (lntA).